The primary structure comprises 340 residues: GTP 3',8-cyclase (340 aa).

Residues 8–229 form the Radical SAM core domain; the sequence is KLGRPIRDLR…IEQHFEISPV (222 aa). GTP is bound at residue Arg-17. Residues Cys-24 and Cys-28 each contribute to the [4Fe-4S] cluster site. Tyr-30 is an S-adenosyl-L-methionine binding site. Residue Cys-31 coordinates [4Fe-4S] cluster. GTP is bound at residue Arg-71. Position 75 (Gly-75) interacts with S-adenosyl-L-methionine. Thr-102 is a GTP binding site. Ser-126 is a binding site for S-adenosyl-L-methionine. GTP is bound at residue Lys-163. An S-adenosyl-L-methionine-binding site is contributed by Met-197. [4Fe-4S] cluster contacts are provided by Cys-261 and Cys-264. Residue 266 to 268 coordinates GTP; it reads RAR. Residue Cys-278 coordinates [4Fe-4S] cluster.

Belongs to the radical SAM superfamily. MoaA family. As to quaternary structure, monomer and homodimer. [4Fe-4S] cluster is required as a cofactor.

It catalyses the reaction GTP + AH2 + S-adenosyl-L-methionine = (8S)-3',8-cyclo-7,8-dihydroguanosine 5'-triphosphate + 5'-deoxyadenosine + L-methionine + A + H(+). It functions in the pathway cofactor biosynthesis; molybdopterin biosynthesis. Functionally, catalyzes the cyclization of GTP to (8S)-3',8-cyclo-7,8-dihydroguanosine 5'-triphosphate. In Staphylococcus epidermidis (strain ATCC 35984 / DSM 28319 / BCRC 17069 / CCUG 31568 / BM 3577 / RP62A), this protein is GTP 3',8-cyclase.